Reading from the N-terminus, the 832-residue chain is Protein P (832 aa).

The tract at residues 1–177 is terminal protein domain (TP); that stretch reads MPLSYQHFRK…FCGSPYSWEQ (177 aa). Positions 178-335 are spacer; sequence ELQHGAESFH…YCLSHLVSLL (158 aa). The interval 336-679 is polymerase/reverse transcriptase domain (RT); that stretch reads DDWGPCTEHG…YSTLYPVARQ (344 aa). The 244-residue stretch at 346–589 folds into the Reverse transcriptase domain; it reads EHHIRIPRTP…YSLHFMGYVI (244 aa). Positions 418, 540, and 541 each coordinate Mg(2+).

It belongs to the hepadnaviridae P protein family.

It catalyses the reaction DNA(n) + a 2'-deoxyribonucleoside 5'-triphosphate = DNA(n+1) + diphosphate. It carries out the reaction Endonucleolytic cleavage to 5'-phosphomonoester.. With respect to regulation, activated by host HSP70 and HSP40 in vitro to be able to bind the epsilon loop of the pgRNA. Because deletion of the RNase H region renders the protein partly chaperone-independent, the chaperones may be needed indirectly to relieve occlusion of the RNA-binding site by this domain. Inhibited by several reverse-transcriptase inhibitors: Lamivudine, Adefovir and Entecavir. Functionally, multifunctional enzyme that converts the viral RNA genome into dsDNA in viral cytoplasmic capsids. This enzyme displays a DNA polymerase activity that can copy either DNA or RNA templates, and a ribonuclease H (RNase H) activity that cleaves the RNA strand of RNA-DNA heteroduplexes in a partially processive 3'- to 5'-endonucleasic mode. Neo-synthesized pregenomic RNA (pgRNA) are encapsidated together with the P protein, and reverse-transcribed inside the nucleocapsid. Initiation of reverse-transcription occurs first by binding the epsilon loop on the pgRNA genome, and is initiated by protein priming, thereby the 5'-end of (-)DNA is covalently linked to P protein. Partial (+)DNA is synthesized from the (-)DNA template and generates the relaxed circular DNA (RC-DNA) genome. After budding and infection, the RC-DNA migrates in the nucleus, and is converted into a plasmid-like covalently closed circular DNA (cccDNA). The activity of P protein does not seem to be necessary for cccDNA generation, and is presumably released from (+)DNA by host nuclear DNA repair machinery. The protein is Protein P of Pan troglodytes (Chimpanzee).